A 400-amino-acid chain; its full sequence is Protein transport protein HofC homolog (400 aa).

Transmembrane regions (helical) follow at residues 165-185 (YPIIILAMAIMVVVAMLHFVL), 209-229 (LADFSGEWSWLLVLFGFLLAI), and 370-390 (LLIITGGIIGTLVVAMYLPIF).

It belongs to the GSP F family.

It localises to the cell inner membrane. The protein is Protein transport protein HofC homolog (hofC) of Escherichia coli (strain K12).